The chain runs to 292 residues: Porphobilinogen deaminase (292 aa).

Cys-236 carries the S-(dipyrrolylmethanemethyl)cysteine modification.

Belongs to the HMBS family. In terms of assembly, monomer. Dipyrromethane serves as cofactor.

It catalyses the reaction 4 porphobilinogen + H2O = hydroxymethylbilane + 4 NH4(+). Its pathway is porphyrin-containing compound metabolism; protoporphyrin-IX biosynthesis; coproporphyrinogen-III from 5-aminolevulinate: step 2/4. Tetrapolymerization of the monopyrrole PBG into the hydroxymethylbilane pre-uroporphyrinogen in several discrete steps. This is Porphobilinogen deaminase from Wolbachia sp. subsp. Drosophila simulans (strain wRi).